We begin with the raw amino-acid sequence, 757 residues long: Cellulose synthase-like protein B5 (757 aa).

2 consecutive transmembrane segments (helical) span residues 24–44 (AVDL…ILHI) and 50–70 (VWLL…IFTC). Residues aspartate 136 and aspartate 460 contribute to the active site. The next 6 helical transmembrane spans lie at 531–551 (LAYF…YCLL), 572–592 (IVTL…SLGF), 613–633 (LFSI…GFVI), 671–691 (LFIP…GYLV), 704–724 (GSGL…LPFL), and 735–755 (IPLS…FFCV).

This sequence belongs to the glycosyltransferase 2 family. Plant cellulose synthase-like B subfamily. As to expression, expressed in young seedlings, primarily in the vascular tissue. Expressed in the root cap.

The protein resides in the golgi apparatus membrane. Functionally, thought to be a Golgi-localized beta-glycan synthase that polymerize the backbones of noncellulosic polysaccharides (hemicelluloses) of plant cell wall. This Arabidopsis thaliana (Mouse-ear cress) protein is Cellulose synthase-like protein B5 (CSLB5).